Here is a 390-residue protein sequence, read N- to C-terminus: 1-deoxy-D-xylulose 5-phosphate reductoisomerase (390 aa).

NADPH is bound by residues T10, G11, S12, V13, G38, N40, and N123. Residue K124 coordinates 1-deoxy-D-xylulose 5-phosphate. E125 lines the NADPH pocket. D149 is a binding site for Mn(2+). The 1-deoxy-D-xylulose 5-phosphate site is built by S150, E151, S175, and H198. E151 contacts Mn(2+). Residue G204 participates in NADPH binding. 1-deoxy-D-xylulose 5-phosphate-binding residues include S211, N216, K217, and E220. E220 serves as a coordination point for Mn(2+).

The protein belongs to the DXR family. Mg(2+) serves as cofactor. Requires Mn(2+) as cofactor.

The catalysed reaction is 2-C-methyl-D-erythritol 4-phosphate + NADP(+) = 1-deoxy-D-xylulose 5-phosphate + NADPH + H(+). Its pathway is isoprenoid biosynthesis; isopentenyl diphosphate biosynthesis via DXP pathway; isopentenyl diphosphate from 1-deoxy-D-xylulose 5-phosphate: step 1/6. Functionally, catalyzes the NADPH-dependent rearrangement and reduction of 1-deoxy-D-xylulose-5-phosphate (DXP) to 2-C-methyl-D-erythritol 4-phosphate (MEP). This Paracoccus denitrificans (strain Pd 1222) protein is 1-deoxy-D-xylulose 5-phosphate reductoisomerase.